The sequence spans 446 residues: Phosphoglucosamine mutase (446 aa).

Ser103 serves as the catalytic Phosphoserine intermediate. The Mg(2+) site is built by Ser103, Asp242, Asp244, and Asp246. Ser103 is subject to Phosphoserine.

The protein belongs to the phosphohexose mutase family. Mg(2+) serves as cofactor. Post-translationally, activated by phosphorylation.

It carries out the reaction alpha-D-glucosamine 1-phosphate = D-glucosamine 6-phosphate. In terms of biological role, catalyzes the conversion of glucosamine-6-phosphate to glucosamine-1-phosphate. The polypeptide is Phosphoglucosamine mutase (Vibrio vulnificus (strain YJ016)).